The sequence spans 212 residues: NAD(P)H-quinone oxidoreductase subunit K, chloroplastic (212 aa).

The [4Fe-4S] cluster site is built by Cys-43, Cys-44, Cys-108, and Cys-139.

Belongs to the complex I 20 kDa subunit family. In terms of assembly, NDH is composed of at least 16 different subunits, 5 of which are encoded in the nucleus. It depends on [4Fe-4S] cluster as a cofactor.

It localises to the plastid. The protein resides in the chloroplast thylakoid membrane. The enzyme catalyses a plastoquinone + NADH + (n+1) H(+)(in) = a plastoquinol + NAD(+) + n H(+)(out). The catalysed reaction is a plastoquinone + NADPH + (n+1) H(+)(in) = a plastoquinol + NADP(+) + n H(+)(out). NDH shuttles electrons from NAD(P)H:plastoquinone, via FMN and iron-sulfur (Fe-S) centers, to quinones in the photosynthetic chain and possibly in a chloroplast respiratory chain. The immediate electron acceptor for the enzyme in this species is believed to be plastoquinone. Couples the redox reaction to proton translocation, and thus conserves the redox energy in a proton gradient. The chain is NAD(P)H-quinone oxidoreductase subunit K, chloroplastic from Phaseolus vulgaris (Kidney bean).